We begin with the raw amino-acid sequence, 107 residues long: Sulfurtransferase Alvin_2599 (107 aa).

Residues 16–104 (DTEDVLLVDI…WARHGLPIVA (89 aa)) enclose the Rhodanese domain. Residue Cys-64 is the Cysteine persulfide intermediate of the active site.

As to quaternary structure, monomer.

Its subcellular location is the cytoplasm. Its pathway is energy metabolism; sulfur metabolism. Functionally, sulfur carrier protein involved in sulfur trafficking for oxidative dissimilatory sulfur metabolism. Component of a sulfur relay system that starts with the sulfur-mobilizing rhodanese-like protein Rhd_2599 (Alvin_2599), which transfers the sulfur from a low-molecular-weight thiol, maybe glutathione, to the TusA protein (Alvin_2600); TusA serves as the sulfur donor for DsrEFH, which persulfurates DsrC; persulfurated DsrC very probably serves as a direct substrate for reverse-acting sulfite reductase, DsrAB. Is able to catalyze the sulfur transfer reaction from thiosulfate or glutathione (GSSH) to cyanide in vitro, however, thiosulfate is unlikely an in vivo substrate. This is Sulfurtransferase Alvin_2599 from Allochromatium vinosum (strain ATCC 17899 / DSM 180 / NBRC 103801 / NCIMB 10441 / D) (Chromatium vinosum).